The following is a 261-amino-acid chain: tRNA pseudouridine synthase A (261 aa).

The active-site Nucleophile is the Asp-51. Tyr-109 serves as a coordination point for substrate.

This sequence belongs to the tRNA pseudouridine synthase TruA family. As to quaternary structure, homodimer.

The enzyme catalyses uridine(38/39/40) in tRNA = pseudouridine(38/39/40) in tRNA. Functionally, formation of pseudouridine at positions 38, 39 and 40 in the anticodon stem and loop of transfer RNAs. This is tRNA pseudouridine synthase A from Haemophilus ducreyi (strain 35000HP / ATCC 700724).